The primary structure comprises 230 residues: Flagellar L-ring protein (230 aa).

Positions 1–21 (MMLKTVLRLPVCAALLALAAG) are cleaved as a signal peptide. Cys-22 carries N-palmitoyl cysteine lipidation. Cys-22 carries S-diacylglycerol cysteine lipidation. The segment at 34–53 (PLTAPPPPPPQPSARPNGSI) is disordered. A compositionally biased stretch (pro residues) spans 36-46 (TAPPPPPPQPS).

It belongs to the FlgH family. The basal body constitutes a major portion of the flagellar organelle and consists of four rings (L,P,S, and M) mounted on a central rod.

The protein localises to the cell outer membrane. It is found in the bacterial flagellum basal body. Assembles around the rod to form the L-ring and probably protects the motor/basal body from shearing forces during rotation. This is Flagellar L-ring protein from Bordetella parapertussis (strain 12822 / ATCC BAA-587 / NCTC 13253).